The chain runs to 445 residues: Guanosine nucleotide diphosphate dissociation inhibitor 1 (445 aa).

Belongs to the Rab GDI family. As to quaternary structure, interacts with the GDP-bound form of RABA5C (via C-terminus). Expressed in roots, rosette leaves, stems, floral buds and siliques.

Its function is as follows. Regulates the GDP/GTP exchange reaction of most RAB proteins by inhibiting the dissociation of GDP from them, and the subsequent binding of GTP. This chain is Guanosine nucleotide diphosphate dissociation inhibitor 1 (GDI1), found in Arabidopsis thaliana (Mouse-ear cress).